A 199-amino-acid chain; its full sequence is Holliday junction branch migration complex subunit RuvA (199 aa).

The segment at 1–63 is domain I; that stretch reads MIGCLIGEVF…EDAQQLYGFS (63 aa). A domain II region spans residues 64–142; the sequence is DAQEKTIFRT…TLAQGTSSAA (79 aa). A flexible linker region spans residues 143–150; it reads ALPQIQFV. The domain III stretch occupies residues 150–199; that stretch reads VSNSPVAEAEAALQSLGYKPLEAQKAVAAVKADYTESADIIRAALKSMMK.

This sequence belongs to the RuvA family. In terms of assembly, homotetramer. Forms an RuvA(8)-RuvB(12)-Holliday junction (HJ) complex. HJ DNA is sandwiched between 2 RuvA tetramers; dsDNA enters through RuvA and exits via RuvB. An RuvB hexamer assembles on each DNA strand where it exits the tetramer. Each RuvB hexamer is contacted by two RuvA subunits (via domain III) on 2 adjacent RuvB subunits; this complex drives branch migration. In the full resolvosome a probable DNA-RuvA(4)-RuvB(12)-RuvC(2) complex forms which resolves the HJ.

Its subcellular location is the cytoplasm. The RuvA-RuvB-RuvC complex processes Holliday junction (HJ) DNA during genetic recombination and DNA repair, while the RuvA-RuvB complex plays an important role in the rescue of blocked DNA replication forks via replication fork reversal (RFR). RuvA specifically binds to HJ cruciform DNA, conferring on it an open structure. The RuvB hexamer acts as an ATP-dependent pump, pulling dsDNA into and through the RuvAB complex. HJ branch migration allows RuvC to scan DNA until it finds its consensus sequence, where it cleaves and resolves the cruciform DNA. This Acinetobacter baumannii (strain SDF) protein is Holliday junction branch migration complex subunit RuvA.